We begin with the raw amino-acid sequence, 831 residues long: Valine--tRNA ligase (831 aa).

Positions 77-87 match the 'HIGH' region motif; the sequence is PFTSGELHMGH. Positions 564–568 match the 'KMSKS' region motif; the sequence is RMSKS. An ATP-binding site is contributed by lysine 567.

Belongs to the class-I aminoacyl-tRNA synthetase family. ValS type 2 subfamily.

It localises to the cytoplasm. It carries out the reaction tRNA(Val) + L-valine + ATP = L-valyl-tRNA(Val) + AMP + diphosphate. Functionally, catalyzes the attachment of valine to tRNA(Val). As ValRS can inadvertently accommodate and process structurally similar amino acids such as threonine, to avoid such errors, it has a 'posttransfer' editing activity that hydrolyzes mischarged Thr-tRNA(Val) in a tRNA-dependent manner. This Sulfolobus acidocaldarius (strain ATCC 33909 / DSM 639 / JCM 8929 / NBRC 15157 / NCIMB 11770) protein is Valine--tRNA ligase.